Here is a 156-residue protein sequence, read N- to C-terminus: Transcription antitermination protein NusB (156 aa).

This sequence belongs to the NusB family.

In terms of biological role, involved in transcription antitermination. Required for transcription of ribosomal RNA (rRNA) genes. Binds specifically to the boxA antiterminator sequence of the ribosomal RNA (rrn) operons. The polypeptide is Transcription antitermination protein NusB (Rickettsia conorii (strain ATCC VR-613 / Malish 7)).